The chain runs to 151 residues: Transcriptional regulator MraZ (151 aa).

SpoVT-AbrB domains follow at residues 5–52 and 81–124; these read ANAI…PLDE and AVDL…DEDA.

It belongs to the MraZ family. Forms oligomers.

The protein localises to the cytoplasm. The protein resides in the nucleoid. The protein is Transcriptional regulator MraZ of Pseudomonas fluorescens (strain SBW25).